We begin with the raw amino-acid sequence, 331 residues long: MVRIAINGFGRIGRLVLRIALSRKNIEVVAINDPFITVDYAAYMFKYDSTHGRFDGEVSHDGKSLIIDGKKVLVFQERDPATLPWGAEKIDIAIDSTGIFKELDSAQKHIDAGAKKVVITAPSSTAPMFVVGVNEDKYAGQTIVSNASCTTNCLAPLAKIINNAFGIEEGLMTTVHSITATQKTVDGPSHKDWRGGRTASGNIIPSSTGAAKAVGKVLPELQGKLTGMAFRVPTVDVSVVDLTVKLAKPATYEEIKAVVKKASENELKGVMGYTEDAVVSSDFLGDTHSSIFDAAAGIQLSPQFVKLVSWYDNEFGYSTRVVDLVELVAKN.

NAD(+) is bound by residues 11 to 12 (RI), Asp-33, and Arg-78. Residues 148-150 (SCT), Thr-179, 208-209 (TG), and Arg-231 each bind D-glyceraldehyde 3-phosphate. The active-site Nucleophile is the Cys-149. NAD(+) is bound at residue Asn-313.

This sequence belongs to the glyceraldehyde-3-phosphate dehydrogenase family. In terms of assembly, homotetramer.

The protein localises to the cytoplasm. It carries out the reaction D-glyceraldehyde 3-phosphate + phosphate + NAD(+) = (2R)-3-phospho-glyceroyl phosphate + NADH + H(+). It participates in carbohydrate degradation; glycolysis; pyruvate from D-glyceraldehyde 3-phosphate: step 1/5. The protein is Glyceraldehyde-3-phosphate dehydrogenase 2 (GAP2) of Kluyveromyces marxianus (Yeast).